Here is a 341-residue protein sequence, read N- to C-terminus: L-threonine 3-dehydrogenase (341 aa).

Cysteine 38 is a Zn(2+) binding site. Residues threonine 40 and histidine 43 each act as charge relay system in the active site. 6 residues coordinate Zn(2+): histidine 63, glutamate 64, cysteine 93, cysteine 96, cysteine 99, and cysteine 107. Residues isoleucine 175, aspartate 195, arginine 200, 262–264, and 286–287 contribute to the NAD(+) site; these read LGI and IY.

It belongs to the zinc-containing alcohol dehydrogenase family. Homotetramer. Zn(2+) is required as a cofactor.

The protein localises to the cytoplasm. The enzyme catalyses L-threonine + NAD(+) = (2S)-2-amino-3-oxobutanoate + NADH + H(+). It participates in amino-acid degradation; L-threonine degradation via oxydo-reductase pathway; glycine from L-threonine: step 1/2. In terms of biological role, catalyzes the NAD(+)-dependent oxidation of L-threonine to 2-amino-3-ketobutyrate. In Colwellia psychrerythraea (strain 34H / ATCC BAA-681) (Vibrio psychroerythus), this protein is L-threonine 3-dehydrogenase.